A 71-amino-acid chain; its full sequence is Large ribosomal subunit protein uL30 (71 aa).

Belongs to the universal ribosomal protein uL30 family. As to quaternary structure, part of the 50S ribosomal subunit.

The polypeptide is Large ribosomal subunit protein uL30 (Mycolicibacterium paratuberculosis (strain ATCC BAA-968 / K-10) (Mycobacterium paratuberculosis)).